Reading from the N-terminus, the 118-residue chain is Immunoglobulin lambda variable 2-8 (118 aa).

An N-terminal signal peptide occupies residues 1 to 19 (MAWALLLLTLLTQGTGSWA). Gln20 carries the post-translational modification Pyrrolidone carboxylic acid. Positions 20–44 (QSALTQPPSASGSPGQSVTISCTGT) are framework-1. An Ig-like domain is found at 20–118 (QSALTQPPSA…CSSYAGSNNF (99 aa)). Cysteines 41 and 109 form a disulfide. A complementarity-determining-1 region spans residues 45–53 (SSDVGGYNY). The framework-2 stretch occupies residues 54–70 (VSWYQQHPGKAPKLMIY). Residues 71–73 (EVS) are complementarity-determining-2. Residues 74–109 (KRPSGVPDRFSGSKSGNTASLTVSGLQAEDEADYYC) are framework-3. The interval 76 to 97 (PSGVPDRFSGSKSGNTASLTVS) is disordered. Positions 85 to 97 (GSKSGNTASLTVS) are enriched in polar residues. The interval 110-118 (SSYAGSNNF) is complementarity-determining-3.

In terms of assembly, immunoglobulins are composed of two identical heavy chains and two identical light chains; disulfide-linked.

The protein localises to the secreted. The protein resides in the cell membrane. In terms of biological role, v region of the variable domain of immunoglobulin light chains that participates in the antigen recognition. Immunoglobulins, also known as antibodies, are membrane-bound or secreted glycoproteins produced by B lymphocytes. In the recognition phase of humoral immunity, the membrane-bound immunoglobulins serve as receptors which, upon binding of a specific antigen, trigger the clonal expansion and differentiation of B lymphocytes into immunoglobulins-secreting plasma cells. Secreted immunoglobulins mediate the effector phase of humoral immunity, which results in the elimination of bound antigens. The antigen binding site is formed by the variable domain of one heavy chain, together with that of its associated light chain. Thus, each immunoglobulin has two antigen binding sites with remarkable affinity for a particular antigen. The variable domains are assembled by a process called V-(D)-J rearrangement and can then be subjected to somatic hypermutations which, after exposure to antigen and selection, allow affinity maturation for a particular antigen. The polypeptide is Immunoglobulin lambda variable 2-8 (Homo sapiens (Human)).